Reading from the N-terminus, the 83-residue chain is MNEILSKIKSIIIEKLGVDEKKVIPEASFINDLGADSLDSIELIMEFEKEFDIIISDDIAEKLITVDDANQYIKKYLDDKKSF.

In terms of domain architecture, Carrier spans 2 to 77 (NEILSKIKSI…DANQYIKKYL (76 aa)). S37 is subject to O-(pantetheine 4'-phosphoryl)serine.

This sequence belongs to the acyl carrier protein (ACP) family. 4'-phosphopantetheine is transferred from CoA to a specific serine of apo-ACP by AcpS. This modification is essential for activity because fatty acids are bound in thioester linkage to the sulfhydryl of the prosthetic group.

It localises to the cytoplasm. Its pathway is lipid metabolism; fatty acid biosynthesis. Its function is as follows. Carrier of the growing fatty acid chain in fatty acid biosynthesis. The sequence is that of Acyl carrier protein from Karelsulcia muelleri (strain GWSS) (Sulcia muelleri).